Reading from the N-terminus, the 196-residue chain is Large ribosomal subunit protein bL20 (196 aa).

Belongs to the bacterial ribosomal protein bL20 family.

Functionally, binds directly to 23S ribosomal RNA and is necessary for the in vitro assembly process of the 50S ribosomal subunit. It is not involved in the protein synthesizing functions of that subunit. In Oenococcus oeni (strain ATCC BAA-331 / PSU-1), this protein is Large ribosomal subunit protein bL20 (rplT).